A 31-amino-acid chain; its full sequence is Cytochrome b6-f complex subunit 6 (31 aa).

A helical membrane pass occupies residues 4–24 (ITSYFGFLLAALTITSALFIG).

The protein belongs to the PetL family. In terms of assembly, the 4 large subunits of the cytochrome b6-f complex are cytochrome b6, subunit IV (17 kDa polypeptide, PetD), cytochrome f and the Rieske protein, while the 4 small subunits are PetG, PetL, PetM and PetN. The complex functions as a dimer.

Its subcellular location is the plastid. The protein localises to the chloroplast thylakoid membrane. In terms of biological role, component of the cytochrome b6-f complex, which mediates electron transfer between photosystem II (PSII) and photosystem I (PSI), cyclic electron flow around PSI, and state transitions. PetL is important for photoautotrophic growth as well as for electron transfer efficiency and stability of the cytochrome b6-f complex. The chain is Cytochrome b6-f complex subunit 6 from Solanum tuberosum (Potato).